Reading from the N-terminus, the 207-residue chain is Outer-membrane lipoprotein LolB (207 aa).

The N-terminal stretch at 1–21 (MPLPDFRFIRLLPLAALVLTA) is a signal peptide. Cys22 is lipidated: N-palmitoyl cysteine. A lipid anchor (S-diacylglycerol cysteine) is attached at Cys22.

The protein belongs to the LolB family. As to quaternary structure, monomer.

It is found in the cell outer membrane. Plays a critical role in the incorporation of lipoproteins in the outer membrane after they are released by the LolA protein. This Escherichia coli O6:K15:H31 (strain 536 / UPEC) protein is Outer-membrane lipoprotein LolB.